A 230-amino-acid chain; its full sequence is Flagellar L-ring protein (230 aa).

An N-terminal signal peptide occupies residues 1–22 (MSPISNFARIALACTVAALLGG). Residue C23 is the site of N-palmitoyl cysteine attachment. Residue C23 is the site of S-diacylglycerol cysteine attachment.

It belongs to the FlgH family. In terms of assembly, the basal body constitutes a major portion of the flagellar organelle and consists of four rings (L,P,S, and M) mounted on a central rod.

Its subcellular location is the cell outer membrane. The protein resides in the bacterial flagellum basal body. Assembles around the rod to form the L-ring and probably protects the motor/basal body from shearing forces during rotation. This is Flagellar L-ring protein from Stenotrophomonas maltophilia (strain K279a).